We begin with the raw amino-acid sequence, 327 residues long: Lipoyl synthase (327 aa).

The [4Fe-4S] cluster site is built by Cys-66, Cys-71, Cys-77, Cys-92, Cys-96, Cys-99, and Ser-306. A Radical SAM core domain is found at 78 to 295 (FSKGTATFMI…EKEAYELGFT (218 aa)).

It belongs to the radical SAM superfamily. Lipoyl synthase family. The cofactor is [4Fe-4S] cluster.

Its subcellular location is the cytoplasm. It catalyses the reaction [[Fe-S] cluster scaffold protein carrying a second [4Fe-4S](2+) cluster] + N(6)-octanoyl-L-lysyl-[protein] + 2 oxidized [2Fe-2S]-[ferredoxin] + 2 S-adenosyl-L-methionine + 4 H(+) = [[Fe-S] cluster scaffold protein] + N(6)-[(R)-dihydrolipoyl]-L-lysyl-[protein] + 4 Fe(3+) + 2 hydrogen sulfide + 2 5'-deoxyadenosine + 2 L-methionine + 2 reduced [2Fe-2S]-[ferredoxin]. It functions in the pathway protein modification; protein lipoylation via endogenous pathway; protein N(6)-(lipoyl)lysine from octanoyl-[acyl-carrier-protein]: step 2/2. Its function is as follows. Catalyzes the radical-mediated insertion of two sulfur atoms into the C-6 and C-8 positions of the octanoyl moiety bound to the lipoyl domains of lipoate-dependent enzymes, thereby converting the octanoylated domains into lipoylated derivatives. This is Lipoyl synthase from Neisseria gonorrhoeae (strain ATCC 700825 / FA 1090).